The chain runs to 247 residues: tRNA (guanine-N(7)-)-methyltransferase (247 aa).

S-adenosyl-L-methionine contacts are provided by residues Gly-70, Glu-93–Ile-94, Asn-128–Ala-129, and Leu-148. Asp-151 is a catalytic residue. Ser-226–Glu-228 contributes to the S-adenosyl-L-methionine binding site.

Belongs to the class I-like SAM-binding methyltransferase superfamily. TrmB family.

The protein localises to the nucleus. The enzyme catalyses guanosine(46) in tRNA + S-adenosyl-L-methionine = N(7)-methylguanosine(46) in tRNA + S-adenosyl-L-homocysteine. It participates in tRNA modification; N(7)-methylguanine-tRNA biosynthesis. Its function is as follows. Catalyzes the formation of N(7)-methylguanine at position 46 (m7G46) in tRNA. The polypeptide is tRNA (guanine-N(7)-)-methyltransferase (Drosophila pseudoobscura pseudoobscura (Fruit fly)).